The primary structure comprises 466 residues: Asparagine--tRNA ligase (466 aa).

It belongs to the class-II aminoacyl-tRNA synthetase family. Homodimer.

The protein localises to the cytoplasm. The enzyme catalyses tRNA(Asn) + L-asparagine + ATP = L-asparaginyl-tRNA(Asn) + AMP + diphosphate + H(+). This chain is Asparagine--tRNA ligase, found in Shewanella sediminis (strain HAW-EB3).